Consider the following 308-residue polypeptide: Glutaminase (308 aa).

7 residues coordinate substrate: serine 66, asparagine 117, glutamate 161, asparagine 168, tyrosine 192, tyrosine 244, and valine 262.

The protein belongs to the glutaminase family. Homotetramer.

It catalyses the reaction L-glutamine + H2O = L-glutamate + NH4(+). This chain is Glutaminase, found in Enterobacter sp. (strain 638).